Reading from the N-terminus, the 341-residue chain is Cytoplasmic tRNA 2-thiolation protein 1 (341 aa).

This sequence belongs to the TtcA family. CTU1/NCS6/ATPBD3 subfamily.

Its subcellular location is the cytoplasm. Its pathway is tRNA modification; 5-methoxycarbonylmethyl-2-thiouridine-tRNA biosynthesis. Functionally, plays a central role in 2-thiolation of mcm(5)S(2)U at tRNA wobble positions of tRNA(Lys), tRNA(Glu) and tRNA(Gln). Directly binds tRNAs and probably acts by catalyzing adenylation of tRNAs, an intermediate required for 2-thiolation. It is unclear whether it acts as a sulfurtransferase that transfers sulfur from thiocarboxylated URM1 onto the uridine of tRNAs at wobble position. This chain is Cytoplasmic tRNA 2-thiolation protein 1, found in Aedes aegypti (Yellowfever mosquito).